Reading from the N-terminus, the 457-residue chain is Phosphomethylpyrimidine synthase (457 aa).

Substrate is bound by residues asparagine 81, methionine 110, tyrosine 139, histidine 175, 195–197 (SRG), 236–239 (DALR), and glutamate 275. Histidine 279 contacts Zn(2+). A substrate-binding site is contributed by tyrosine 302. Histidine 343 is a Zn(2+) binding site. [4Fe-4S] cluster contacts are provided by cysteine 423, cysteine 426, and cysteine 431.

The protein belongs to the ThiC family. It depends on [4Fe-4S] cluster as a cofactor.

It carries out the reaction 5-amino-1-(5-phospho-beta-D-ribosyl)imidazole + S-adenosyl-L-methionine = 4-amino-2-methyl-5-(phosphooxymethyl)pyrimidine + CO + 5'-deoxyadenosine + formate + L-methionine + 3 H(+). It functions in the pathway cofactor biosynthesis; thiamine diphosphate biosynthesis. Catalyzes the synthesis of the hydroxymethylpyrimidine phosphate (HMP-P) moiety of thiamine from aminoimidazole ribotide (AIR) in a radical S-adenosyl-L-methionine (SAM)-dependent reaction. The chain is Phosphomethylpyrimidine synthase from Aquifex aeolicus (strain VF5).